Here is a 122-residue protein sequence, read N- to C-terminus: Large ribosomal subunit protein bL20 (122 aa).

This sequence belongs to the bacterial ribosomal protein bL20 family.

Functionally, binds directly to 23S ribosomal RNA and is necessary for the in vitro assembly process of the 50S ribosomal subunit. It is not involved in the protein synthesizing functions of that subunit. This chain is Large ribosomal subunit protein bL20, found in Saccharopolyspora erythraea (strain ATCC 11635 / DSM 40517 / JCM 4748 / NBRC 13426 / NCIMB 8594 / NRRL 2338).